A 502-amino-acid chain; its full sequence is uncharacterized protein (502 aa).

The next 2 helical transmembrane spans lie at 10–30 (NLTLNLTIIFLIFCNISIXIF) and 473–493 (FSLIIVNLIILPTIILIFGLV).

The protein localises to the cell membrane. This is an uncharacterized protein from Borreliella burgdorferi (strain ATCC 35210 / DSM 4680 / CIP 102532 / B31) (Borrelia burgdorferi).